Here is a 328-residue protein sequence, read N- to C-terminus: D-cysteine desulfhydrase (328 aa).

Lys-51 carries the post-translational modification N6-(pyridoxal phosphate)lysine.

Belongs to the ACC deaminase/D-cysteine desulfhydrase family. As to quaternary structure, homodimer. The cofactor is pyridoxal 5'-phosphate.

It catalyses the reaction D-cysteine + H2O = hydrogen sulfide + pyruvate + NH4(+) + H(+). In terms of biological role, catalyzes the alpha,beta-elimination reaction of D-cysteine and of several D-cysteine derivatives. It could be a defense mechanism against D-cysteine. This Klebsiella pneumoniae (strain 342) protein is D-cysteine desulfhydrase.